The sequence spans 310 residues: Protease HtpX homolog (310 aa).

2 consecutive transmembrane segments (helical) span residues 16–36 and 55–75; these read NAVL…VDVI and IFPT…VVCI. A Zn(2+)-binding site is contributed by histidine 166. Glutamate 167 is a catalytic residue. Histidine 170 contributes to the Zn(2+) binding site. The next 2 membrane-spanning stretches (helical) occupy residues 182–202 and 214–234; these read VGIL…FFMG and MILL…QMYL. Glutamate 239 lines the Zn(2+) pocket.

This sequence belongs to the peptidase M48B family. Zn(2+) serves as cofactor.

Its subcellular location is the cell inner membrane. This Helicobacter pylori (strain Shi470) protein is Protease HtpX homolog.